We begin with the raw amino-acid sequence, 309 residues long: Manganese ABC transporter substrate-binding lipoprotein PsaA (309 aa).

A signal peptide spans 1–19 (MKKLGTLLVLFLSAIILVA). A lipid anchor (N-palmitoyl cysteine) is attached at Cys-20. A lipid anchor (S-diacylglycerol cysteine) is attached at Cys-20. His-67, His-139, Glu-205, and Asp-280 together coordinate Mn(2+).

This sequence belongs to the bacterial solute-binding protein 9 family. Lipoprotein receptor antigen (Lrai) subfamily.

It is found in the cell membrane. Functionally, part of the ATP-binding cassette (ABC) transport system PsaABC involved in manganese import. Binds manganese with high affinity and specificity and delivers it to the membrane permease for translocation into the cytoplasm. Also acts as an adhesin which is involved on adherence to extracellular matrix. It is an important factor in pathogenesis and infection. The polypeptide is Manganese ABC transporter substrate-binding lipoprotein PsaA (psaA) (Streptococcus pneumoniae serotype 4 (strain ATCC BAA-334 / TIGR4)).